Consider the following 199-residue polypeptide: dITP/XTP pyrophosphatase (199 aa).

8–13 (TSNINK) is a substrate binding site. D68 (proton acceptor) is an active-site residue. Residue D68 coordinates Mg(2+). Residues S69, 155–158 (FGYN), K177, and 182–183 (HR) each bind substrate.

Belongs to the HAM1 NTPase family. As to quaternary structure, homodimer. It depends on Mg(2+) as a cofactor.

The catalysed reaction is XTP + H2O = XMP + diphosphate + H(+). It carries out the reaction dITP + H2O = dIMP + diphosphate + H(+). The enzyme catalyses ITP + H2O = IMP + diphosphate + H(+). Pyrophosphatase that catalyzes the hydrolysis of nucleoside triphosphates to their monophosphate derivatives, with a high preference for the non-canonical purine nucleotides XTP (xanthosine triphosphate), dITP (deoxyinosine triphosphate) and ITP. Seems to function as a house-cleaning enzyme that removes non-canonical purine nucleotides from the nucleotide pool, thus preventing their incorporation into DNA/RNA and avoiding chromosomal lesions. The sequence is that of dITP/XTP pyrophosphatase from Borrelia recurrentis (strain A1).